The primary structure comprises 113 residues: Large ribosomal subunit protein uL24 (113 aa).

Belongs to the universal ribosomal protein uL24 family. Part of the 50S ribosomal subunit.

Functionally, one of two assembly initiator proteins, it binds directly to the 5'-end of the 23S rRNA, where it nucleates assembly of the 50S subunit. Its function is as follows. One of the proteins that surrounds the polypeptide exit tunnel on the outside of the subunit. This chain is Large ribosomal subunit protein uL24, found in Micrococcus luteus (Micrococcus lysodeikticus).